The following is a 597-amino-acid chain: DNA primase (597 aa).

Zn(2+) is bound by residues cysteine 40, histidine 43, cysteine 61, and cysteine 64. The segment at 40-64 adopts a CHC2-type zinc-finger fold; sequence CPFHGEKTPSFSVSPEKQIFHCFGC. One can recognise a Toprim domain in the interval 262 to 342; the sequence is QEALLVEGFA…RVKVASLPNG (81 aa). The Mg(2+) site is built by glutamate 268, aspartate 311, and aspartate 313. The segment covering 429–447 has biased composition (basic and acidic residues); that stretch reads LSRSQRERTKPREAPDGET. The segment at 429 to 448 is disordered; sequence LSRSQRERTKPREAPDGETA.

This sequence belongs to the DnaG primase family. In terms of assembly, monomer. Interacts with replicative helicase DnaB, as DnaB(6):DnaG(3). A stable complex DnaI(6):DnaB(6):DnaG(3) fragment can be isolated; DnaI and DnaG do not contact each other (DnaI in this complex is derived from B.subtilis). Requires Zn(2+) as cofactor. It depends on Mg(2+) as a cofactor.

It carries out the reaction ssDNA + n NTP = ssDNA/pppN(pN)n-1 hybrid + (n-1) diphosphate.. Its function is as follows. RNA polymerase that catalyzes the synthesis of short RNA molecules used as primers for DNA polymerase during DNA replication. This is DNA primase from Geobacillus stearothermophilus (Bacillus stearothermophilus).